The chain runs to 800 residues: MTDSQALVPGPSPPHSKAEICYGATFFNISSYGIMEKYETPTVIFGYALPLLELQIILIFVCIVLSHMFLRRIGIPRFVSNILAGLILGPQLLDLLEYSSDRLSLDIPGNVALEGVARLGLVMFTFLMGVKTNKRAVYQIGKRPIVIAVSSFFVTMISGLAFRNFRLDKVDPLYMPLRLAPTERSVIVSIQAVTLLPVITHLVYELKMSNSELGRIAISTAAVSDFLGFLTLVCISYVGTYRYVSPGIANRDIVALIILVLVILFIFKPMAQRIVDMTPEGKPVPKVYLYVTILTAIAASIYLSVFNQMYILGALLVGLAIPDGPPLGSALEARFESLVTNIFFPISIAVMAMKADVVRALYSFDDISFNILLLGLTVVVKWTASFVPCLIFCELPTRESVIIATIMNYKGFVDLCFFDVALRRRNLSRATYTVMIIYVLLNAGILPTIIKALYDPKRKYIGYVKRDIMHLKTNSDLKILTCLHKPDNISGAISLLELLSSPLNNDNKDRGVIAVTALHLVKLAGRTFPILIPHDKRSKARLLQNSYIQTMMLAFTEFQQENWESTTVSSFTAYSHENLMDQDICNLALDHLTSMIIVPSGRKWSPDGEYESDDIMIRRVNESLLDLAPCSVGILNYRGYNKGKKKTNSIINVGVIFIGGKDDREALSLAKWMGQNSRVCLTVIRFLSGQELDKSKNWDYLVDDEVLNDLKATYSLANNFNYMEKVVNGGPAVATTVRLVAEDHDLMIVGRDHEDYSLDLTGLAQWMELPELGVIGDLLASKDLRARVSVLVVQQQQQHG.

The next 12 helical transmembrane spans lie at 43 to 63 (VIFG…FVCI), 73 to 93 (IGIP…PQLL), 110 to 130 (NVAL…LMGV), 145 to 165 (IVIA…FRNF), 186 to 206 (VIVS…VYEL), 216 to 236 (IAIS…VCIS), 247 to 267 (GIAN…LFIF), 287 to 306 (VYLY…LSVF), 338 to 358 (LVTN…ADVV), 371 to 391 (ILLL…PCLI), 401 to 421 (VIIA…FDVA), and 430 to 450 (ATYT…PTII).

It belongs to the monovalent cation:proton antiporter 2 (CPA2) transporter (TC 2.A.37) family. CHX (TC 2.A.37.4) subfamily.

Its subcellular location is the membrane. Its function is as follows. May operate as a cation/H(+) antiporter. The sequence is that of Cation/H(+) antiporter 9 (CHX9) from Arabidopsis thaliana (Mouse-ear cress).